An 81-amino-acid chain; its full sequence is Small ribosomal subunit protein bS18 (81 aa).

This sequence belongs to the bacterial ribosomal protein bS18 family. As to quaternary structure, part of the 30S ribosomal subunit. Forms a tight heterodimer with protein bS6.

Functionally, binds as a heterodimer with protein bS6 to the central domain of the 16S rRNA, where it helps stabilize the platform of the 30S subunit. The sequence is that of Small ribosomal subunit protein bS18 from Desulfotalea psychrophila (strain LSv54 / DSM 12343).